We begin with the raw amino-acid sequence, 935 residues long: Progesterone receptor (935 aa).

Residues 1-164 (MTELKAKGPR…PATQRVLSPL (164 aa)) are AF3; mediates transcriptional activation. Positions 1 to 256 (MTELKAKGPR…AAAGGGAAAV (256 aa)) are disordered. The tract at residues 1–568 (MTELKAKGPR…YSFESLPQKI (568 aa)) is modulating, Pro-Rich. The residue at position 20 (serine 20) is a Phosphoserine. An LXXL motif 1 motif is present at residues 55–59 (LDGLL). At serine 81 the chain carries Phosphoserine. Positions 115-119 (LDTLL) match the LXXL motif 2 motif. A phosphoserine mark is found at serine 130 and serine 162. The tract at residues 165-305 (MSRSGGKAGD…LATTTMDFTH (141 aa)) is mediates transcriptional transrepression. The Nuclear localization signal signature appears at 183 to 187 (KVLPR). 2 positions are modified to phosphoserine: serine 190 and serine 213. Residues 220-231 (EVEEEDGSESED) are compositionally biased toward acidic residues. Residues 232–246 (SAGPLLKGKPRALGG) show a composition bias toward low complexity. The residue at position 294 (serine 294) is a Phosphoserine; by MAPK1. The tract at residues 328–353 (SYDGGAGAASAFAPPRSSPSASSTPV) is disordered. The segment covering 335 to 350 (AASAFAPPRSSPSASS) has biased composition (low complexity). Serine 345 bears the Phosphoserine; by MAPK mark. Lysine 388 is covalently cross-linked (Glycyl lysine isopeptide (Lys-Gly) (interchain with G-Cter in SUMO); alternate). A Glycyl lysine isopeptide (Lys-Gly) (interchain with G-Cter in ubiquitin); alternate cross-link involves residue lysine 388. Serine 400 is subject to Phosphoserine; by CDK2. The tract at residues 415-452 (PDFPLGPPPPLPPRAPPSRPGEAAVTAAPAGASVSSAS) is disordered. Residues 418–433 (PLGPPPPLPPRAPPSR) show a composition bias toward pro residues. The span at 434–452 (PGEAAVTAAPAGASVSSAS) shows a compositional bias: low complexity. The interval 456–548 (STLECILYKA…VYPPYLNYLR (93 aa)) is AF1; mediates transcriptional activation. Lysine 533 is covalently cross-linked (Glycyl lysine isopeptide (Lys-Gly) (interchain with G-Cter in SUMO)). NR C4-type zinc fingers lie at residues 569–589 (CLICGDEASGCHYGVLTCGSC) and 605–629 (CAGRNDCIVDKIRRKNCPACRLRKC). Residues 569–641 (CLICGDEASG…AGMVLGGRKF (73 aa)) constitute a DNA-binding region (nuclear receptor). Position 678 is a phosphoserine (serine 678). Residues 681 to 915 (QDIQLIPPLI…EFPEMMSEVI (235 aa)) enclose the NR LBD domain. The AF2; mediates transcriptional activation stretch occupies residues 689 to 935 (LINLLVSIEP…MVKPLLFHKK (247 aa)). Arginine 768 provides a ligand contact to progesterone.

Belongs to the nuclear hormone receptor family. In terms of assembly, interacts with SMARD1 and UNC45A. Interacts with CUEDC2; the interaction promotes ubiquitination, decreases sumoylation, and represses transcriptional activity. Interacts with PIAS3; the interaction promotes sumoylation of PR in a hormone-dependent manner, inhibits DNA-binding, and alters nuclear export. Interacts with SP1; the interaction requires ligand-induced phosphorylation on Ser-345 by ERK1/2-MAPK. Interacts with PRMT2. Interacts with NCOA2 and NCOA1. Interacts with KLF9. Interacts with GTF2B. In terms of processing, phosphorylated on multiple serine sites. Several of these sites are hormone-dependent. Phosphorylation on Ser-294 is highly hormone-dependent and modulates ubiquitination and sumoylation on Lys-388. Phosphorylation on Ser-345 also requires induction by hormone. Basal phosphorylation on Ser-81, Ser-162, Ser-190 and Ser-400 is increased in response to progesterone and can be phosphorylated in vitro by the CDK2-A1 complex. Increased levels of phosphorylation on Ser-400 also in the presence of EGF, heregulin, IGF, PMA and FBS. Phosphorylation at this site by CDK2 is ligand-independent, and increases nuclear translocation and transcriptional activity. Phosphorylation at Ser-162 and Ser-294, but not at Ser-190, is impaired during the G(2)/M phase of the cell cycle. Phosphorylation on Ser-345 by ERK1/2 MAPK is required for interaction with SP1. Post-translationally, sumoylation is hormone-dependent and represses transcriptional activity. Sumoylation on all three sites is enhanced by PIAS3. Desumoylated by SENP1. Sumoylation on Lys-388, the main site of sumoylation, is repressed by ubiquitination on the same site, and modulated by phosphorylation at Ser-294. Ubiquitination is hormone-dependent and represses sumoylation on the same site. Promoted by MAPK-mediated phosphorylation on Ser-294. Ubiquitinated by UBR5, leading to its degradation: UBR5 specifically recognizes and binds ligand-bound PGR when it is not associated with coactivators (NCOAs). In presence of NCOAs, the UBR5-degron is not accessible, preventing its ubiquitination and degradation. In terms of processing, palmitoylated by ZDHHC7 and ZDHHC21. Palmitoylation is required for plasma membrane targeting and for rapid intracellular signaling via ERK and AKT kinases and cAMP generation.

It is found in the nucleus. The protein resides in the cytoplasm. Its function is as follows. The steroid hormones and their receptors are involved in the regulation of eukaryotic gene expression and affect cellular proliferation and differentiation in target tissues. Transcriptional activator of several progesteron-dependent promoters in a variety of cell types. Involved in activation of SRC-dependent MAPK signaling on hormone stimulation. The protein is Progesterone receptor (PGR) of Macaca sylvanus (Barbary macaque).